We begin with the raw amino-acid sequence, 173 residues long: NADH-ubiquinone oxidoreductase chain 6 (173 aa).

The next 5 membrane-spanning stretches (helical) occupy residues 1-21, 27-47, 48-68, 87-107, and 139-159; these read MTYF…AVAS, YGVV…LSLG, VSFV…VVFV, VVGY…VGGF, and CGVG…FVVL.

It belongs to the complex I subunit 6 family.

The protein resides in the mitochondrion membrane. It catalyses the reaction a ubiquinone + NADH + 5 H(+)(in) = a ubiquinol + NAD(+) + 4 H(+)(out). Functionally, core subunit of the mitochondrial membrane respiratory chain NADH dehydrogenase (Complex I) that is believed to belong to the minimal assembly required for catalysis. Complex I functions in the transfer of electrons from NADH to the respiratory chain. The immediate electron acceptor for the enzyme is believed to be ubiquinone. This is NADH-ubiquinone oxidoreductase chain 6 (MT-ND6) from Aethia pygmaea (Whiskered auklet).